The primary structure comprises 349 residues: Protein-glutamate methylesterase/protein-glutamine glutaminase (349 aa).

A Response regulatory domain is found at 5 to 122; that stretch reads RVLSVDDSAL…REGMLAYSEM (118 aa). At aspartate 56 the chain carries 4-aspartylphosphate. Residues 152–344 enclose the CheB-type methylesterase domain; it reads LLSSEKLIAI…QQMLAKISAG (193 aa). Residues serine 164, histidine 190, and aspartate 286 contribute to the active site.

This sequence belongs to the CheB family. Post-translationally, phosphorylated by CheA. Phosphorylation of the N-terminal regulatory domain activates the methylesterase activity.

The protein localises to the cytoplasm. The enzyme catalyses [protein]-L-glutamate 5-O-methyl ester + H2O = L-glutamyl-[protein] + methanol + H(+). It catalyses the reaction L-glutaminyl-[protein] + H2O = L-glutamyl-[protein] + NH4(+). Involved in chemotaxis. Part of a chemotaxis signal transduction system that modulates chemotaxis in response to various stimuli. Catalyzes the demethylation of specific methylglutamate residues introduced into the chemoreceptors (methyl-accepting chemotaxis proteins or MCP) by CheR. Also mediates the irreversible deamidation of specific glutamine residues to glutamic acid. This Escherichia coli O6:H1 (strain CFT073 / ATCC 700928 / UPEC) protein is Protein-glutamate methylesterase/protein-glutamine glutaminase.